The sequence spans 917 residues: Calcium-activated chloride channel regulator 1 (917 aa).

Positions 1–21 are cleaved as a signal peptide; sequence MGSFRSSLFILVLHLLEGAQS. Positions 46 to 199 are metalloprotease domain; the sequence is DERLIQNIKD…AIRGTNVLPQ (154 aa). His156 provides a ligand contact to Zn(2+). Residue Glu157 is part of the active site. Residues His160 and Asn167 each coordinate Zn(2+). Positions 306 to 475 constitute a VWFA domain; the sequence is IVCLVLDKSG…NGLIDAFGAL (170 aa). Asn503, Asn772, Asn806, Asn812, Asn838, and Asn893 each carry an N-linked (GlcNAc...) asparagine glycan.

This sequence belongs to the CLCR family. Post-translationally, glycosylated. The translation product is autoproteolytically cleaved by the metalloprotease domain in the endoplasmic reticulum into a N-terminal and a C-terminal products that remain physically associated with each other. The cleavage is necessary for calcium-activated chloride channel (CaCC) activation activity. In terms of tissue distribution, expressed in ileum, trachea, and the major salivary glands. In ileum, expressed to the crypt and villus epithelia, whereas in trachea expressed in both surface epithelium and submucosal glands.

The protein resides in the secreted. The protein localises to the extracellular space. Its function is as follows. May be involved in mediating calcium-activated chloride conductance. May play critical roles in goblet cell metaplasia, mucus hypersecretion, cystic fibrosis and AHR. May be involved in the regulation of mucus production and/or secretion by goblet cells. Involved in the regulation of tissue inflammation in the innate immune response. May play a role as a tumor suppressor. Induces MUC5AC. Induces a cAMP-dependent chloride conductance possibly through effects on CFTR in colon carcinoma cells. The polypeptide is Calcium-activated chloride channel regulator 1 (CLCA1) (Sus scrofa (Pig)).